A 530-amino-acid polypeptide reads, in one-letter code: MSMPDAMPLPGVGEELKQAKEIEDAEKYSFMATVTKAPKKQIQFADDMQEFTKFPTKTGRRSLSRSISQSSTDSYSSAASYTDSSDDEVSPREKQQTNSKGSSNFCVKNIKQAEFGRREIEIAEQDMSALISLRKRAQGEKPLAGAKIVGCTHITAQTAVLIETLCALGAQCRWSACNIYSTQNEVAAALAEAGVAVFAWKGESEDDFWWCIDRCVNMDGWQANMILDDGGDLTHWVYKKYPNVFKKIRGIVEESVTGVHRLYQLSKAGKLCVPAMNVNDSVTKQKFDNLYCCRESILDGLKRTTDVMFGGKQVVVCGYGEVGKGCCAALKALGAIVYITEIDPICALQACMDGFRVVKLNEVIRQVDVVITCTGNKNVVTREHLDRMKNSCIVCNMGHSNTEIDVTSLRTPELTWERVRSQVDHVIWPDGKRVVLLAEGRLLNLSCSTVPTFVLSITATTQALALIELYNAPEGRYKQDVYLLPKKMDEYVASLHLPSFDAHLTELTDDQAKYLGLNKNGPFKPNYYRY.

Met1 carries the post-translational modification N-acetylmethionine. Ser2 is modified (N-acetylserine). A Phosphoserine modification is found at Ser2. Lys40 carries the post-translational modification N6-acetyllysine. Residues 53 to 103 (KFPTKTGRRSLSRSISQSSTDSYSSAASYTDSSDDEVSPREKQQTNSKGSS) are disordered. A compositionally biased stretch (low complexity) spans 64-83 (SRSISQSSTDSYSSAASYTD). The segment at 65 to 92 (RSISQSSTDSYSSAASYTDSSDDEVSPR) is PEST. 5 positions are modified to phosphoserine: Ser68, Ser71, Ser74, Ser77, and Ser84. Residues 138–201 (QGEKPLAGAK…EAGVAVFAWK (64 aa)) are interaction with BCL2L10. Substrate contacts are provided by Thr155, Asp229, Glu254, Lys284, and Asp288. Positions 281–448 (SVTKQKFDNL…EGRLLNLSCS (168 aa)) are NAD binding. NAD(+)-binding positions include 318–322 (GYGEV), Glu341, and Asn376. A Phosphoserine modification is found at Ser391. 397-399 (MGH) contributes to the NAD(+) binding site. A PDZ-binding region spans residues 520 to 530 (NGPFKPNYYRY).

This sequence belongs to the adenosylhomocysteinase family. In terms of assembly, forms multimers. Forms heteromultimers with AHCYL2 (via the C-terminal region). Interacts (when phosphorylated) with ITPR1 (when not phosphorylated); the interaction suppresses inositol 1,4,5-trisphosphate binding to ITPR1. Interacts with BCL2L10; this strengthens the interaction of AHCYL1 with ITPR1. Interacts with CFTR and SLC26A6; the interactions take place once AHCYL1 is released from ITPR1 and increase CFTR and SLC26A6 activities. Interacts with RRM1; in a phosphorylation- and (dATP)-dependent manner. Interacts (via PEST domain when phosphorylated) with SLC4A4 isoform 1 but not isoform 2; the interaction increases SLC4A4 isoform 1 activity. Interacts (when phosphorylated) with SLC9A3; the interaction is required for SLC9A3 apical location and activity. Interacts (when phosphorylated) with FIP1L1; the interaction is direct and associates AHCYL1 with the CPSF complex and RNA. Interacts with PAPOLA. Interacts with ZCCHC4. Interacts with AHCY. NAD(+) is required as a cofactor. In terms of processing, phosphorylated at Ser/Thr residues between Ser-68 and Thr-72 in the PEST region: required for interaction with dATP-bound RRM1 and ITPR1. Phosphorylation at Ser-68 by PRKD1 and CAMK4 is required for further phosphorylations by CSNK1A1. Phosphorylation is induced by oxidative stress. Probably phosphorylated by CAMK2A; phosphorylation at Ser-68 may be required for interaction with SLC9A3. Dephosphorylated in response to apoptotic stress conditions which causes translocation of both AHCYL1 and BCL2L10 from mitochondria-associated endoplasmic reticulum membranes and promotes apoptosis. Expressed in dendritic cells.

It localises to the endoplasmic reticulum. Its subcellular location is the cytoplasm. The protein resides in the cytosol. It is found in the apical cell membrane. The protein localises to the microsome. In terms of biological role, multifaceted cellular regulator which coordinates several essential cellular functions including regulation of epithelial HCO3(-) and fluid secretion, mRNA processing and DNA replication. Regulates ITPR1 sensitivity to inositol 1,4,5-trisphosphate, competing for the common binding site and acting as endogenous 'pseudoligand' whose inhibitory activity can be modulated by its phosphorylation status. Promotes the formation of contact points between the endoplasmic reticulum (ER) and mitochondria, facilitating transfer of Ca(2+) from the ER to mitochondria. Under normal cellular conditions, functions cooperatively with BCL2L10 to limit ITPR1-mediated Ca(2+) release but, under apoptotic stress conditions, dephosphorylated which promotes dissociation of both AHCYL1 and BCL2L10 from mitochondria-associated endoplasmic reticulum membranes, inhibits BCL2L10 interaction with ITPR1 and leads to increased Ca(2+) transfer to mitochondria which promotes apoptosis. In the pancreatic and salivary ducts, at resting state, attenuates inositol 1,4,5-trisphosphate-induced calcium release by interacting with ITPR1. When extracellular stimuli induce ITPR1 phosphorylation or inositol 1,4,5-trisphosphate production, dissociates from ITPR1 to interact with CFTR and SLC26A6, mediating their synergistic activation by calcium and cAMP that stimulates the epithelial secretion of electrolytes and fluid. Also activates basolateral SLC4A4 isoform 1 to coordinate fluid and HCO3(-) secretion. Inhibits the effect of STK39 on SLC4A4 and CFTR by recruiting PP1 phosphatase which activates SLC4A4, SLC26A6 and CFTR through dephosphorylation. Mediates the induction of SLC9A3 surface expression produced by Angiotensin-2. Depending on the cell type, activates SLC9A3 in response to calcium or reverses SLC9A3R2-dependent calcium inhibition. May modulate the polyadenylation state of specific mRNAs, both by controlling the subcellular location of FIP1L1 and by inhibiting PAPOLA activity, in response to a stimulus that alters its phosphorylation state. Acts as a (dATP)-dependent inhibitor of ribonucleotide reductase large subunit RRM1, controlling the endogenous dNTP pool and ensuring normal cell cycle progression. In vitro does not exhibit any S-adenosyl-L-homocysteine hydrolase activity. This is S-adenosylhomocysteine hydrolase-like protein 1 from Homo sapiens (Human).